We begin with the raw amino-acid sequence, 581 residues long: Terpene synthase 2, chloroplastic (581 aa).

The N-terminal 34 residues, 1–34 (MYSLPGATMSAAPASIISSSSFVEPLLLAAASPA), are a transit peptide targeting the chloroplast. Substrate is bound by residues Arg-299, Asp-336, Asp-340, and Arg-480. Mg(2+) is bound by residues Asp-336 and Asp-340. Positions 336 to 340 (DDIFD) match the DDXXD motif motif. 3 residues coordinate Mg(2+): Asp-483, Ser-487, and Glu-491.

Belongs to the terpene synthase family. In terms of assembly, monomer. It depends on Mg(2+) as a cofactor.

The protein localises to the plastid. Its subcellular location is the chloroplast. The catalysed reaction is (2E,6E)-farnesyl diphosphate + H2O = (3S,6E)-nerolidol + diphosphate. It carries out the reaction (2E,6E,10E)-geranylgeranyl diphosphate + H2O = (6E,10E)-geranyllinalool + diphosphate. It catalyses the reaction (2E)-geranyl diphosphate + H2O = (S)-linalool + diphosphate. It functions in the pathway secondary metabolite biosynthesis; terpenoid biosynthesis. Functionally, involved in sesquiterpene (C15), diterpene (C20) and monoterpene (C10) biosynthesis. Has sesquiterpene synthase activity, converting farnesyl diphosphate to nerolidol, the precursor of the volatile C11-homoterpene (E)-3,8-dimethyl-1,4,7-nonatriene (DMNT). Has diterpene synthase activity, converting geranylgeranyl diphosphate to (E,E)-geranyllinalool, the precursor of the volatile C16-homoterpene (E,E)-4,8,12-trimethyltrideca 1,3,7,11-tetraene (TMTT). Has monoterpene synthase activity, converting geranyl diphosphate into linalool. Forms only the S-isomers of the three tertiary terpene alcohols. In Zea mays (Maize), this protein is Terpene synthase 2, chloroplastic.